A 432-amino-acid polypeptide reads, in one-letter code: Glutamyl-tRNA reductase (432 aa).

Residues Thr-55 to Arg-58, Ser-114, Glu-119 to Gln-121, and Gln-125 each bind substrate. Cys-56 (nucleophile) is an active-site residue. Gly-194–Ile-199 contributes to the NADP(+) binding site.

This sequence belongs to the glutamyl-tRNA reductase family. In terms of assembly, homodimer.

The enzyme catalyses (S)-4-amino-5-oxopentanoate + tRNA(Glu) + NADP(+) = L-glutamyl-tRNA(Glu) + NADPH + H(+). The protein operates within porphyrin-containing compound metabolism; protoporphyrin-IX biosynthesis; 5-aminolevulinate from L-glutamyl-tRNA(Glu): step 1/2. Its function is as follows. Catalyzes the NADPH-dependent reduction of glutamyl-tRNA(Glu) to glutamate 1-semialdehyde (GSA). In Burkholderia orbicola (strain MC0-3), this protein is Glutamyl-tRNA reductase.